The sequence spans 151 residues: Protein InSETG-4 (151 aa).

Its subcellular location is the cytoplasm. The protein localises to the cytosol. This Homo sapiens (Human) protein is Protein InSETG-4 (InSet4-G).